We begin with the raw amino-acid sequence, 688 residues long: PTS system glucoside-specific EIICBA component (688 aa).

Residues 3–427 (KKLFGQLQRI…FKLKTPGRED (425 aa)) form the PTS EIIC type-1 domain. The next 10 membrane-spanning stretches (helical) occupy residues 12–32 (IGKA…LLAF), 81–101 (LGLA…YLIM), 137–157 (LVLG…MGAL), 182–202 (FVPI…SFAW), 223–243 (LTTF…LHHI), 284–304 (AFTT…AFAI), 315–335 (VVGG…ITEP), 340–360 (FLFV…TSFL), 364–384 (LLGV…ILYG), and 395–415 (LVIP…DFAI). A PTS EIIB type-1 domain is found at 438-519 (AKLPFDVLDA…AKIMSGEITK (82 aa)). Residue Cys460 is the Phosphocysteine intermediate; for EIIB activity of the active site. A PTS EIIA type-1 domain is found at 560 to 664 (DQVFAGKMMG…SIVTPMIITN (105 aa)). Residue His612 is the Tele-phosphohistidine intermediate; for EIIA activity of the active site.

The protein resides in the cell membrane. The phosphoenolpyruvate-dependent sugar phosphotransferase system (sugar PTS), a major carbohydrate active -transport system, catalyzes the phosphorylation of incoming sugar substrates concomitantly with their translocation across the cell membrane. This system is involved in alpha- and beta-glucoside transport. This is PTS system glucoside-specific EIICBA component (glcB) from Staphylococcus aureus (strain JH1).